The sequence spans 185 residues: Inner membrane-spanning protein YciB (185 aa).

5 consecutive transmembrane segments (helical) span residues 19 to 39, 49 to 69, 72 to 92, 122 to 142, and 150 to 170; these read IHGIYTATEVLIVAAILLMAW, TMTWVSTLLILTFGGLTLYFH, TFIKIKPSILYVLFAAALLFT, GYWIAFFLFGAVLNLIVAYAF, and FKLFGMLAITVIFVLFQAVVI.

The protein belongs to the YciB family.

It is found in the cell inner membrane. Plays a role in cell envelope biogenesis, maintenance of cell envelope integrity and membrane homeostasis. The protein is Inner membrane-spanning protein YciB of Acidithiobacillus ferrooxidans (strain ATCC 23270 / DSM 14882 / CIP 104768 / NCIMB 8455) (Ferrobacillus ferrooxidans (strain ATCC 23270)).